We begin with the raw amino-acid sequence, 358 residues long: Photosystem II protein D1 (358 aa).

Helical transmembrane passes span 28–45, 117–132, and 141–155; these read YVGW…AAAI, HFLI…QWEL, and WICV…AAFA. Chlorophyll a is bound at residue His117. Trp125 contributes to the pheophytin a binding site. Asp169 and Glu188 together coordinate [CaMn4O5] cluster. The helical transmembrane segment at 196-217 threads the bilayer; that stretch reads FHMIGVAGMFGGSLFSAMHGSL. His197 is a chlorophyll a binding site. A quinone contacts are provided by residues His214 and 263–264; that span reads SF. Position 214 (His214) interacts with Fe cation. Position 271 (His271) interacts with Fe cation. The chain crosses the membrane as a helical span at residues 273–287; the sequence is FLAAWPVICIWITSL. [CaMn4O5] cluster is bound by residues His331, Glu332, Asp341, and Ala343. The propeptide occupies 344–358; the sequence is AAESTPVALIAPAIG.

It belongs to the reaction center PufL/M/PsbA/D family. As to quaternary structure, PSII is composed of 1 copy each of membrane proteins PsbA, PsbB, PsbC, PsbD, PsbE, PsbF, PsbH, PsbI, PsbJ, PsbK, PsbL, PsbM, PsbT, PsbX, PsbY, Psb30/Ycf12, peripheral proteins PsbO, CyanoQ (PsbQ), PsbU, PsbV and a large number of cofactors. It forms dimeric complexes. The D1/D2 heterodimer binds P680, chlorophylls that are the primary electron donor of PSII, and subsequent electron acceptors. It shares a non-heme iron and each subunit binds pheophytin, quinone, additional chlorophylls, carotenoids and lipids. D1 provides most of the ligands for the Mn4-Ca-O5 cluster of the oxygen-evolving complex (OEC). There is also a Cl(-1) ion associated with D1 and D2, which is required for oxygen evolution. The PSII complex binds additional chlorophylls, carotenoids and specific lipids. serves as cofactor. Post-translationally, tyr-160 forms a radical intermediate that is referred to as redox-active TyrZ, YZ or Y-Z. C-terminally processed by CtpA; processing is essential to allow assembly of the oxygen-evolving complex and thus photosynthetic growth.

It is found in the cellular thylakoid membrane. The enzyme catalyses 2 a plastoquinone + 4 hnu + 2 H2O = 2 a plastoquinol + O2. Its function is as follows. Photosystem II (PSII) is a light-driven water:plastoquinone oxidoreductase that uses light energy to abstract electrons from H(2)O, generating O(2) and a proton gradient subsequently used for ATP formation. It consists of a core antenna complex that captures photons, and an electron transfer chain that converts photonic excitation into a charge separation. The D1/D2 (PsbA/PsbD) reaction center heterodimer binds P680, the primary electron donor of PSII as well as several subsequent electron acceptors. The chain is Photosystem II protein D1 from Prochlorococcus marinus (strain MIT 9313).